The primary structure comprises 142 residues: Hemoglobin subunit alpha (142 aa).

Residue Ser1 is modified to N-acetylserine. Residues 1–142 form the Globin domain; that stretch reads SLSDKDKAAV…VALALAERYR (142 aa). Residue His59 participates in O2 binding. His88 provides a ligand contact to heme b.

Belongs to the globin family. As to quaternary structure, hb1 is a heterotetramer of two alpha chains and two beta-1 chains, while Hb2 is a heterotetramer of two alpha chains and two beta-2 chains. As to expression, red blood cells.

In terms of biological role, involved in oxygen transport from gills to the various peripheral tissues. The sequence is that of Hemoglobin subunit alpha (hba) from Cygnodraco mawsoni (Antarctic dragonfish).